Here is a 94-residue protein sequence, read N- to C-terminus: Large ribosomal subunit protein bL27 (94 aa).

Positions 1-9 (MLKLNLQFF) are excised as a propeptide. The disordered stretch occupies residues 12-32 (KKGVSSTKNGRDSESKRLGAK). Basic and acidic residues predominate over residues 20–32 (NGRDSESKRLGAK).

It belongs to the bacterial ribosomal protein bL27 family. In terms of processing, the N-terminus is cleaved by ribosomal processing cysteine protease Prp.

The sequence is that of Large ribosomal subunit protein bL27 from Staphylococcus carnosus (strain TM300).